We begin with the raw amino-acid sequence, 252 residues long: ATP synthase subunit a (252 aa).

Transmembrane regions (helical) follow at residues 29 to 49 (FTNVSFFIIATVVATSVFLFI), 87 to 107 (FFPLVFSLFTFILVANFIGLF), 116 to 136 (QIMITFSLAMLVILTVVGYGF), 146 to 166 (LFVPSGVPVVILPLVTMIEVI), 183 to 205 (MLAGHITLKVFSGFIVSMIELGI), and 219 to 239 (VAITALEFLVAFLQAYVFTVL).

Belongs to the ATPase A chain family. In terms of assembly, F-type ATPases have 2 components, CF(1) - the catalytic core - and CF(0) - the membrane proton channel. CF(1) has five subunits: alpha(3), beta(3), gamma(1), delta(1), epsilon(1). CF(0) has three main subunits: a(1), b(2) and c(9-12). The alpha and beta chains form an alternating ring which encloses part of the gamma chain. CF(1) is attached to CF(0) by a central stalk formed by the gamma and epsilon chains, while a peripheral stalk is formed by the delta and b chains.

It is found in the cell inner membrane. Functionally, key component of the proton channel; it plays a direct role in the translocation of protons across the membrane. The chain is ATP synthase subunit a from Bartonella quintana (strain Toulouse) (Rochalimaea quintana).